A 493-amino-acid chain; its full sequence is Fizzy-related protein homolog (493 aa).

Disordered stretches follow at residues 31-51, 64-88, and 105-166; these read LTPANSPVSSPSKHGDRFIPS, INENEKSPSQNRKAKDATSDNGKDG, and EKVQ…SPRK. Thr32 bears the Phosphothreonine mark. The segment covering 32–42 has biased composition (polar residues); sequence TPANSPVSSPS. Ser36 carries the post-translational modification Phosphoserine. The residue at position 69 (Lys69) is an N6-acetyllysine. Basic and acidic residues-rich tracts occupy residues 76 to 86 and 106 to 126; these read KAKDATSDNGK and KVQDPQTEDRRLQPSTPEHKG. 4 positions are modified to phosphoserine: Ser133, Ser138, Ser146, and Ser151. Positions 146-160 are enriched in polar residues; the sequence is SPYSLSPVSNKSQKL. Lys159 carries the N6-acetyllysine modification. WD repeat units follow at residues 182 to 222, 227 to 266, 269 to 306, 311 to 350, 353 to 395, 397 to 438, and 441 to 480; these read PELQ…VTRL, VEGDSVTSVGWSERGNLVAVGTHKGFVQIWDAAAGKKLSM, GHTARVGALAWNADQLSSGSRDRMILQRDIRTPPLQSE, GHRQEVCGLKWSTDHQLLASGGNDNKLLVWNHSSLSPVQQ, EHLA…PLQC, DTGS…QVAK, and GHSYRVLYLAMSPDGEAIVTGAGDETLRFWNVFSKTRSTK.

The protein belongs to the WD repeat CDC20/Fizzy family. The unphosphorylated form interacts with APC/C during mitosis. Interacts with NINL. Interacts (in complex with the anaphase promoting complex APC) with MAD2L2; inhibits FZR1-mediated APC/C activation. Interacts with SIRT2. Interacts with USP37. Interacts (via WD repeats) with MAK. Interacts with RBBP8/CtIP; this interaction leads to RBBP8 proteasomal degradation. Interacts with HECW2. Interacts with SASS6; the interaction is regulated by CENATAC and leads to SASS6 proteasomal degradation. Interacts (via N-terminus) with CCNF. Interacts with CDC6. Interacts with TK1 (via the KEN box). Post-translationally, acetylated. Deacetylated by SIRT2 at Lys-69 and Lys-159; deacetylation enhances the interaction of FZR1 with CDC27, leading to activation of anaphase promoting complex/cyclosome (APC/C). In terms of processing, following DNA damage, it is dephosphorylated by CDC14B in G2 phase, leading to its reassociation with the APC/C, and allowing an efficient G2 DNA damage checkpoint. Phosphorylated by MAK.

Its pathway is protein modification; protein ubiquitination. Functionally, substrate-specific adapter for the anaphase promoting complex/cyclosome (APC/C) E3 ubiquitin-protein ligase complex. Associates with the APC/C in late mitosis, in replacement of CDC20, and activates the APC/C during anaphase and telophase. The APC/C remains active in degrading substrates to ensure that positive regulators of the cell cycle do not accumulate prematurely. At the G1/S transition FZR1 is phosphorylated, leading to its dissociation from the APC/C. Following DNA damage, it is required for the G2 DNA damage checkpoint: its dephosphorylation and reassociation with the APC/C leads to the ubiquitination of PLK1, preventing entry into mitosis. Acts as an adapter for APC/C to target the DNA-end resection factor RBBP8/CtIP for ubiquitination and subsequent proteasomal degradation. Through the regulation of RBBP8/CtIP protein turnover, may play a role in DNA damage response, favoring DNA double-strand repair through error-prone non-homologous end joining (NHEJ) over error-free, RBBP8-mediated homologous recombination (HR). This Mus musculus (Mouse) protein is Fizzy-related protein homolog (Fzr1).